The primary structure comprises 176 residues: Ribosome maturation factor RimM (176 aa).

The 78-residue stretch at 99-176 folds into the PRC barrel domain; that stretch reads EDEYYWSDLV…RMVVDWERDF (78 aa).

This sequence belongs to the RimM family. In terms of assembly, binds ribosomal protein uS19.

The protein resides in the cytoplasm. In terms of biological role, an accessory protein needed during the final step in the assembly of 30S ribosomal subunit, possibly for assembly of the head region. Essential for efficient processing of 16S rRNA. May be needed both before and after RbfA during the maturation of 16S rRNA. It has affinity for free ribosomal 30S subunits but not for 70S ribosomes. This is Ribosome maturation factor RimM from Psychrobacter sp. (strain PRwf-1).